A 495-amino-acid polypeptide reads, in one-letter code: Lysine--tRNA ligase (495 aa).

2 residues coordinate Mg(2+): E406 and E413.

Belongs to the class-II aminoacyl-tRNA synthetase family. In terms of assembly, homodimer. Requires Mg(2+) as cofactor.

The protein resides in the cytoplasm. The enzyme catalyses tRNA(Lys) + L-lysine + ATP = L-lysyl-tRNA(Lys) + AMP + diphosphate. This Staphylococcus aureus (strain MRSA252) protein is Lysine--tRNA ligase.